Consider the following 2353-residue polypeptide: Nonribosomal peptide synthetase 7 (2353 aa).

The adenylation 1 stretch occupies residues 305–684 (TFSALNTRAN…AIEEVEDSAV (380 aa)). Residues 776-853 (RDLTDSEKVV…QVAAAVQPQP (78 aa)) enclose the Carrier 1 domain. Serine 813 is subject to O-(pantetheine 4'-phosphoryl)serine. Residues 885–1147 (EDAFPVTPFQ…LMVAPLRVKV (263 aa)) form a condensation 1 region. The adenylation 2 stretch occupies residues 1338–1725 (TYAGLAIKMN…QTNVFRQCAV (388 aa)). Residues 1826–1902 (EICSEAEREL…EQAALMVQGQ (77 aa)) enclose the Carrier 2 domain. Serine 1863 carries the O-(pantetheine 4'-phosphoryl)serine modification. A condensation 2 region spans residues 1939-2214 (EDIYPCSPGQ…NGNCANFLPY (276 aa)).

It belongs to the NRP synthetase family.

In terms of biological role, nonribosomal peptide synthesis (NRPS) is a key mechanism responsible for the biosynthesis of bioactive metabolites which are potentially contributing to organismal virulence. The protein is Nonribosomal peptide synthetase 7 (NRPS7) of Aspergillus fumigatus (strain ATCC MYA-4609 / CBS 101355 / FGSC A1100 / Af293) (Neosartorya fumigata).